Reading from the N-terminus, the 906-residue chain is Alanine--tRNA ligase, chloroplastic/mitochondrial (906 aa).

The segment covering Met1–Leu10 has biased composition (basic and acidic residues). Residues Met1 to Asn22 are disordered. Residues His589, His593, Cys691, and His695 each coordinate Zn(2+).

Belongs to the class-II aminoacyl-tRNA synthetase family. Monomer. It depends on Zn(2+) as a cofactor.

It is found in the plastid. The protein resides in the chloroplast. Its subcellular location is the mitochondrion. It catalyses the reaction tRNA(Ala) + L-alanine + ATP = L-alanyl-tRNA(Ala) + AMP + diphosphate. Catalyzes the attachment of alanine to tRNA(Ala) in a two-step reaction: alanine is first activated by ATP to form Ala-AMP and then transferred to the acceptor end of tRNA(Ala). Also edits incorrectly charged tRNA(Ala) via its editing domain. This Ostreococcus lucimarinus (strain CCE9901) protein is Alanine--tRNA ligase, chloroplastic/mitochondrial.